The chain runs to 129 residues: Large ribosomal subunit protein eL32 (129 aa).

Belongs to the eukaryotic ribosomal protein eL32 family.

This chain is Large ribosomal subunit protein eL32 (rpl32e), found in Methanosarcina mazei (strain ATCC BAA-159 / DSM 3647 / Goe1 / Go1 / JCM 11833 / OCM 88) (Methanosarcina frisia).